We begin with the raw amino-acid sequence, 253 residues long: Retinoic acid early-inducible protein 1-gamma (253 aa).

The N-terminal stretch at 1-28 is a signal peptide; it reads MAKAAVTKRHHFMIQKLLILLSYGYTNG. A disulfide bond links cysteine 37 and cysteine 56. Asparagine 38, asparagine 70, asparagine 83, asparagine 143, and asparagine 156 each carry an N-linked (GlcNAc...) asparagine glycan. An intrachain disulfide couples cysteine 90 to cysteine 190. Positions 198 to 230 are disordered; sequence LKQSKEKPRSTSRSPSITQLTSTSPLPPPSHST. The segment covering 211-221 has biased composition (low complexity); the sequence is SPSITQLTSTS. Residue serine 227 is the site of GPI-anchor amidated serine attachment. A propeptide spans 228–253 (removed in mature form); it reads HSTSKKGFISVGLIFISLLFAFAFAM.

The protein belongs to the NKG2D ligand family. Post-translationally, glycosylated. Expressed predominantly in embryonic brain.

The protein resides in the cell membrane. Its function is as follows. Acts as a ligand for KLRK1. The sequence is that of Retinoic acid early-inducible protein 1-gamma (Raet1c) from Mus musculus (Mouse).